A 221-amino-acid polypeptide reads, in one-letter code: Serine/arginine-rich splicing factor 9 (221 aa).

RRM domains follow at residues 14 to 89 (GRIY…FPRT) and 111 to 187 (FRVL…PERS). Residue Lys-36 forms a Glycyl lysine isopeptide (Lys-Gly) (interchain with G-Cter in SUMO2) linkage. Positions 188-200 (TSYGYSRSRSGSR) are interaction with SAFB1. Phosphoserine is present on Ser-189. The span at 189–198 (SYGYSRSRSG) shows a compositional bias: low complexity. The disordered stretch occupies residues 189-221 (SYGYSRSRSGSRGRDSPYQSRGSPHYFSPFRPY). Position 192 is a phosphotyrosine (Tyr-192). A phosphoserine mark is found at Ser-193, Ser-195, Ser-204, Ser-208, and Ser-211. Tyr-214 bears the Phosphotyrosine mark. A Phosphoserine modification is found at Ser-216.

It belongs to the splicing factor SR family. Interacts with KHDRBS3. Interacts with HABP4. Interacts with NOL3/ARC/NOP30. Interacts with NSEP1/YB-1/YB1. Interacts with SAFB/SAFB1. Interacts with SRSF6/SFRS6. Interacts with TRA2B/SFRS10. Interacts with C1QBP. May also interact with DUSP11/PIR1. Extensively phosphorylated on serine residues in the RS domain. In terms of tissue distribution, expressed at high levels in the heart, kidney, pancreas and placenta, and at lower levels in the brain, liver, lung and skeletal muscle.

The protein resides in the nucleus. In terms of biological role, plays a role in constitutive splicing and can modulate the selection of alternative splice sites. Represses the splicing of MAPT/Tau exon 10. In Homo sapiens (Human), this protein is Serine/arginine-rich splicing factor 9 (SRSF9).